An 87-amino-acid polypeptide reads, in one-letter code: Small ribosomal subunit protein bS20 (87 aa).

The protein belongs to the bacterial ribosomal protein bS20 family.

Functionally, binds directly to 16S ribosomal RNA. This Clostridium perfringens (strain ATCC 13124 / DSM 756 / JCM 1290 / NCIMB 6125 / NCTC 8237 / Type A) protein is Small ribosomal subunit protein bS20.